The following is a 747-amino-acid chain: Pentatricopeptide repeat-containing protein At5g39710 (747 aa).

PPR repeat units lie at residues 133 to 167 (TSSV…GFMP), 168 to 203 (GVLS…QVSP), 204 to 238 (NVFT…GCLP), 239 to 273 (NVVT…GLEP), 274 to 308 (NLIS…GYSL), 309 to 343 (DEVT…GLTP), 344 to 378 (SVIT…GLCP), 379 to 413 (NERT…GFSP), 414 to 448 (SVVT…GLSP), 449 to 483 (DVVS…GIKP), 484 to 518 (DTIT…GLPP), 519 to 553 (DEFT…GVLP), 554 to 588 (DVVT…ESVP), 604 to 638 (EFKS…NHKP), and 639 to 673 (DGTA…GFLL).

This sequence belongs to the PPR family. P subfamily.

The chain is Pentatricopeptide repeat-containing protein At5g39710 (EMB2745) from Arabidopsis thaliana (Mouse-ear cress).